The following is a 313-amino-acid chain: Nucleoside diphosphate-linked moiety X motif 6 (313 aa).

The Nudix hydrolase domain occupies 138 to 270 (THQVGVAGAV…TSRVARLLLY (133 aa)).

Belongs to the Nudix hydrolase family. Monomer and homodimer.

Its subcellular location is the cytoplasm. The protein resides in the nucleus. It is found in the mitochondrion. May contribute to the regulation of cell proliferation. This Mus musculus (Mouse) protein is Nucleoside diphosphate-linked moiety X motif 6 (Nudt6).